A 433-amino-acid chain; its full sequence is Glutamate-1-semialdehyde 2,1-aminomutase (433 aa).

Position 271 is an N6-(pyridoxal phosphate)lysine (Lys-271).

Belongs to the class-III pyridoxal-phosphate-dependent aminotransferase family. HemL subfamily. Homodimer. It depends on pyridoxal 5'-phosphate as a cofactor.

It is found in the cytoplasm. The enzyme catalyses (S)-4-amino-5-oxopentanoate = 5-aminolevulinate. The protein operates within porphyrin-containing compound metabolism; protoporphyrin-IX biosynthesis; 5-aminolevulinate from L-glutamyl-tRNA(Glu): step 2/2. Its pathway is porphyrin-containing compound metabolism; chlorophyll biosynthesis. The sequence is that of Glutamate-1-semialdehyde 2,1-aminomutase from Prochlorococcus marinus (strain MIT 9301).